The primary structure comprises 232 residues: Small ribosomal subunit protein uS3 (232 aa).

The KH type-2 domain maps to I39–R107. A disordered region spans residues V212 to K232. A compositionally biased stretch (basic and acidic residues) spans Q213–K223.

This sequence belongs to the universal ribosomal protein uS3 family. As to quaternary structure, part of the 30S ribosomal subunit. Forms a tight complex with proteins S10 and S14.

In terms of biological role, binds the lower part of the 30S subunit head. Binds mRNA in the 70S ribosome, positioning it for translation. The sequence is that of Small ribosomal subunit protein uS3 from Campylobacter curvus (strain 525.92).